A 256-amino-acid chain; its full sequence is Protein FixA (256 aa).

It belongs to the ETF beta-subunit/FixA family. Heterodimer of FixA and FixB.

It functions in the pathway amine and polyamine metabolism; carnitine metabolism. Required for anaerobic carnitine reduction. May bring reductant to CaiA. This is Protein FixA from Shigella flexneri serotype 5b (strain 8401).